Here is a 131-residue protein sequence, read N- to C-terminus: Holo-[acyl-carrier-protein] synthase (131 aa).

2 residues coordinate Mg(2+): Asp8 and Glu59.

This sequence belongs to the P-Pant transferase superfamily. AcpS family. Mg(2+) is required as a cofactor.

Its subcellular location is the cytoplasm. The catalysed reaction is apo-[ACP] + CoA = holo-[ACP] + adenosine 3',5'-bisphosphate + H(+). Its function is as follows. Transfers the 4'-phosphopantetheine moiety from coenzyme A to a Ser of acyl-carrier-protein. This chain is Holo-[acyl-carrier-protein] synthase, found in Rickettsia rickettsii (strain Sheila Smith).